Reading from the N-terminus, the 235-residue chain is Glucosamine-6-phosphate deaminase (235 aa).

Aspartate 62 acts as the Proton acceptor; for enolization step in catalysis. Asparagine 128 serves as the catalytic For ring-opening step. The active-site Proton acceptor; for ring-opening step is histidine 130. The For ring-opening step role is filled by glutamate 135.

The protein belongs to the glucosamine/galactosamine-6-phosphate isomerase family. NagB subfamily.

The catalysed reaction is alpha-D-glucosamine 6-phosphate + H2O = beta-D-fructose 6-phosphate + NH4(+). The protein operates within amino-sugar metabolism; N-acetylneuraminate degradation; D-fructose 6-phosphate from N-acetylneuraminate: step 5/5. In terms of biological role, catalyzes the reversible isomerization-deamination of glucosamine 6-phosphate (GlcN6P) to form fructose 6-phosphate (Fru6P) and ammonium ion. This is Glucosamine-6-phosphate deaminase from Lactococcus lactis subsp. cremoris (strain SK11).